The sequence spans 224 residues: uncharacterized protein (224 aa).

An N-terminal signal peptide occupies residues 1–23; it reads MKKLLAAGIIGLLTVSIASPSFA. Positions 31–224 constitute a VWFA domain; that stretch reads NVAVLFDGSG…WEKEAQKFTE (194 aa).

This sequence to B.subtilis YwmC.

This is an uncharacterized protein from Bacillus subtilis (strain 168).